Here is a 311-residue protein sequence, read N- to C-terminus: Probable manganese-dependent inorganic pyrophosphatase (311 aa).

6 residues coordinate Mn(2+): His-9, Asp-13, Asp-15, Asp-77, His-99, and Asp-151.

It belongs to the PPase class C family. Mn(2+) is required as a cofactor.

Its subcellular location is the cytoplasm. It carries out the reaction diphosphate + H2O = 2 phosphate + H(+). The protein is Probable manganese-dependent inorganic pyrophosphatase of Streptococcus pneumoniae (strain JJA).